A 140-amino-acid polypeptide reads, in one-letter code: Transcription antitermination protein NusB (140 aa).

Belongs to the NusB family.

In terms of biological role, involved in transcription antitermination. Required for transcription of ribosomal RNA (rRNA) genes. Binds specifically to the boxA antiterminator sequence of the ribosomal RNA (rrn) operons. The sequence is that of Transcription antitermination protein NusB from Sorangium cellulosum (strain So ce56) (Polyangium cellulosum (strain So ce56)).